The primary structure comprises 99 residues: Small integral membrane protein 14 (99 aa).

Topologically, residues 1 to 49 are lumenal; it reads MAEGGFDPCECVCSHEHAMRRLINLLRQSQSYCTDTECLRELPGPSSDS. A helical transmembrane segment spans residues 50–70; that stretch reads GISITVILMAWMVIAMLLFLL. Topologically, residues 71-99 are cytoplasmic; sequence RPPNLRGSSLPGKPSSPHSGQDPPAPPVD. Positions 77–99 are disordered; that stretch reads GSSLPGKPSSPHSGQDPPAPPVD.

As to expression, ubiquitously expressed.

Its subcellular location is the endoplasmic reticulum membrane. The polypeptide is Small integral membrane protein 14 (Smim14) (Mus musculus (Mouse)).